Reading from the N-terminus, the 431-residue chain is ATP-dependent protease ATPase subunit HslU (431 aa).

Residues V18, 60-65 (GVGKTE), D244, E309, and R381 contribute to the ATP site.

This sequence belongs to the ClpX chaperone family. HslU subfamily. A double ring-shaped homohexamer of HslV is capped on each side by a ring-shaped HslU homohexamer. The assembly of the HslU/HslV complex is dependent on binding of ATP.

It is found in the cytoplasm. Its function is as follows. ATPase subunit of a proteasome-like degradation complex; this subunit has chaperone activity. The binding of ATP and its subsequent hydrolysis by HslU are essential for unfolding of protein substrates subsequently hydrolyzed by HslV. HslU recognizes the N-terminal part of its protein substrates and unfolds these before they are guided to HslV for hydrolysis. The chain is ATP-dependent protease ATPase subunit HslU from Caulobacter sp. (strain K31).